A 99-amino-acid chain; its full sequence is RING finger protein Z (99 aa).

Gly-2 is lipidated: N-myristoyl glycine; by host. The RING-type; atypical zinc finger occupies 31–67 (CKSCWFENKGLVECNNHYLCLNCLTLLLSVSNRCPIC). A disordered region spans residues 74-99 (KLRPSAAPTAPPTGAADSIRPPPYSP). Low complexity predominate over residues 77–89 (PSAAPTAPPTGAA). A PTAP/PSAP motif motif is present at residues 81–84 (PTAP). The PPXY motif motif lies at 94–97 (PPPY).

This sequence belongs to the arenaviridae Z protein family. As to quaternary structure, interacts with protein NP; this interaction probably directs the encapsidated genome to budding sites. Interacts (via RING domain) with polymerase L; this interaction inhibits viral transcription and replication, Z partially blocks the product exit tunnel for the releasing nascent RNA product. Interacts with the glycoprotein complex; this interaction plays a role in virion budding. Interacts with host eIF4E; this interaction results in eIF4E reduced affinity for its substrate, the 5'-m7 G cap structure. Interacts (via late-budding domain) with host TSG101; this interaction is essential for budding and release of viral particles. Interacts with host RPLP0; this interaction may serve to load ribosome-like particles inside the virion. Interacts with host PML; this interaction induces PML bodies redistribution in the cytoplasm upon viral infection. Interacts with host TAX1BP1. Myristoylation is required for the role of RING finger protein Z in assembly and budding.

It localises to the virion. It is found in the host cytoplasm. The protein resides in the host perinuclear region. Its subcellular location is the host cell membrane. Its function is as follows. Plays a crucial role in virion assembly and budding. Expressed late in the virus life cycle, it acts as an inhibitor of viral transcription and RNA synthesis by interacting with the viral polymerase L. Presumably recruits the NP encapsidated genome to cellular membranes at budding sites via direct interaction with NP. Plays critical roles in the final steps of viral release by interacting with host TSG101, a member of the vacuolar protein-sorting pathway and using other cellular host proteins involved in vesicle formation pathway. The budding of the virus progeny occurs after association of protein Z with the viral glycoprotein complex SSP-GP1-GP2 at the cell periphery, step that requires myristoylation of protein Z. Also selectively represses protein production by associating with host eIF4E. In cell-based minigenome assay, has an inhibitory effect on the ribonucleoprotein machinery (vRNP), which is responsible for the replication and transcription of the viral genome. The chain is RING finger protein Z from Homo sapiens (Human).